We begin with the raw amino-acid sequence, 761 residues long: MSVQKMMRVPRKMVGGRIPFFTCSKVFSGFSRRSFHESPLARSTYEEEKVLVDEIKQKLTPDDIERCNKLRNIGISAHIDSGKTTFTERVLYYTKRIKAIHEVRGRDNVGAKMDSMDLEREKGITIQSAATYCSWDKEGKNYHFNLIDTPGHIDFTIEVERALRVLDGAVLVVCAVSGVQSQTVTVDRQMRRYNVPRVTFINKMDRMGSDPFRAIEQLNSKLKIPAAAVQIPIGSESSLSGVVDLINRVAIYNKGDNGEIIEKGPVPENLKPLMEEKRQLLIETLADVDDEMAEMFLEEKEPTTQQIKDAIRRSTIARSFTPVLMGSALANTGIQPVLDAIVDYLPNPSEVLNTALDVSNNEAKVNLVPAVQQPFVGLAFKLEEGKYGQLTYVRVYQGRLRKGNYITNVKTGKKVKVARLVRMHSSEMEDVDEVGSGEICATFGIDCASGDTFTDGSVQYSMSSMYVPDAVVSLSITPNSKDASNFSKALNRFQKEDPTFRVKFDPESKETIISGMGELHLEIYVERMRREYNVDCVTGKPQVSYRESITIPADFDYTHKKQSGGAGQYGRVIGTLSPVDDITKGNIFETAIVGGRIPDKYLAACGKGFEEVCEKGPLIGHRVLDVKMLINDGAIHAVDSNELSFKTATMSAFRDAFLRAQPVIMEPIMNVSVTSPNEFQGNVIGLLNKLQAVIQDTENGHDEFTLKAECALSTMFGFATSLRASTQGKGEFSLEFSHYAPTAPHVQKELISEFQKKQAKK.

The N-terminal 42 residues, 1–42, are a transit peptide targeting the mitochondrion; it reads MSVQKMMRVPRKMVGGRIPFFTCSKVFSGFSRRSFHESPLAR. The region spanning 68–349 is the tr-type G domain; it reads NKLRNIGISA…AIVDYLPNPS (282 aa). Residues 77-84, 148-152, and 202-205 contribute to the GTP site; these read AHIDSGKT, DTPGH, and NKMD.

It belongs to the TRAFAC class translation factor GTPase superfamily. Classic translation factor GTPase family. EF-G/EF-2 subfamily. The precursor is processed in two steps involving mitochondrial intermediate peptidase (MIP) and mitochondrial processing peptidase (MPP).

Its subcellular location is the mitochondrion. It participates in protein biosynthesis; polypeptide chain elongation. Functionally, mitochondrial GTPase that catalyzes the GTP-dependent ribosomal translocation step during translation elongation. During this step, the ribosome changes from the pre-translocational (PRE) to the post-translocational (POST) state as the newly formed A-site-bound peptidyl-tRNA and P-site-bound deacylated tRNA move to the P and E sites, respectively. Catalyzes the coordinated movement of the two tRNA molecules, the mRNA and conformational changes in the ribosome. The sequence is that of Elongation factor G, mitochondrial from Saccharomyces cerevisiae (strain YJM789) (Baker's yeast).